The sequence spans 443 residues: UPF0656 protein C926.02 (443 aa).

It belongs to the UPF0656 family.

It is found in the cytoplasm. The protein localises to the nucleus. The protein is UPF0656 protein C926.02 of Schizosaccharomyces pombe (strain 972 / ATCC 24843) (Fission yeast).